A 511-amino-acid polypeptide reads, in one-letter code: Lysine--tRNA ligase (511 aa).

Positions 422 and 429 each coordinate Mg(2+).

Belongs to the class-II aminoacyl-tRNA synthetase family. In terms of assembly, homodimer. Requires Mg(2+) as cofactor.

It localises to the cytoplasm. It catalyses the reaction tRNA(Lys) + L-lysine + ATP = L-lysyl-tRNA(Lys) + AMP + diphosphate. The protein is Lysine--tRNA ligase of Chlorobaculum tepidum (strain ATCC 49652 / DSM 12025 / NBRC 103806 / TLS) (Chlorobium tepidum).